An 828-amino-acid chain; its full sequence is Periplasmic nitrate reductase (828 aa).

A signal peptide (tat-type signal) is located at residues 1-31 (MKLSRRSFMKANAVAAAAAAAGLSVPGVARA). Positions 39-95 (IKWDKAPCRFCGTGCGVLVGTQQGRVVACQGDPDAPVNRGLNCIKGYFLPKIMYGKD) constitute a 4Fe-4S Mo/W bis-MGD-type domain. [4Fe-4S] cluster is bound by residues cysteine 46, cysteine 49, cysteine 53, and cysteine 81. Mo-bis(molybdopterin guanine dinucleotide) contacts are provided by residues lysine 83, glutamine 150, asparagine 175, cysteine 179, 212 to 219 (WGSNMAEM), 243 to 247 (STFQH), 262 to 264 (QSD), methionine 372, glutamine 376, asparagine 482, 508 to 509 (SD), lysine 531, aspartate 558, and 718 to 727 (TGRVLEHWHT). Phenylalanine 794 is a substrate binding site. 2 residues coordinate Mo-bis(molybdopterin guanine dinucleotide): asparagine 802 and lysine 819.

This sequence belongs to the prokaryotic molybdopterin-containing oxidoreductase family. NasA/NapA/NarB subfamily. In terms of assembly, component of the periplasmic nitrate reductase NapAB complex composed of NapA and NapB. Requires [4Fe-4S] cluster as cofactor. It depends on Mo-bis(molybdopterin guanine dinucleotide) as a cofactor. Post-translationally, predicted to be exported by the Tat system. The position of the signal peptide cleavage has not been experimentally proven.

Its subcellular location is the periplasm. The enzyme catalyses 2 Fe(II)-[cytochrome] + nitrate + 2 H(+) = 2 Fe(III)-[cytochrome] + nitrite + H2O. Functionally, catalytic subunit of the periplasmic nitrate reductase complex NapAB. Receives electrons from NapB and catalyzes the reduction of nitrate to nitrite. In Salmonella dublin (strain CT_02021853), this protein is Periplasmic nitrate reductase.